The primary structure comprises 168 residues: 6,7-dimethyl-8-ribityllumazine synthase (168 aa).

Residues Trp-31, 65-67 (SFE), and 89-91 (CVV) contribute to the 5-amino-6-(D-ribitylamino)uracil site. Position 94–95 (94–95 (DT)) interacts with (2S)-2-hydroxy-3-oxobutyl phosphate. The active-site Proton donor is His-97. Tyr-122 is a 5-amino-6-(D-ribitylamino)uracil binding site. Arg-136 is a binding site for (2S)-2-hydroxy-3-oxobutyl phosphate.

The protein belongs to the DMRL synthase family.

The enzyme catalyses (2S)-2-hydroxy-3-oxobutyl phosphate + 5-amino-6-(D-ribitylamino)uracil = 6,7-dimethyl-8-(1-D-ribityl)lumazine + phosphate + 2 H2O + H(+). Its pathway is cofactor biosynthesis; riboflavin biosynthesis; riboflavin from 2-hydroxy-3-oxobutyl phosphate and 5-amino-6-(D-ribitylamino)uracil: step 1/2. Functionally, catalyzes the formation of 6,7-dimethyl-8-ribityllumazine by condensation of 5-amino-6-(D-ribitylamino)uracil with 3,4-dihydroxy-2-butanone 4-phosphate. This is the penultimate step in the biosynthesis of riboflavin. In Phocaeicola vulgatus (strain ATCC 8482 / DSM 1447 / JCM 5826 / CCUG 4940 / NBRC 14291 / NCTC 11154) (Bacteroides vulgatus), this protein is 6,7-dimethyl-8-ribityllumazine synthase.